The sequence spans 349 residues: Fructose-1,6-bisphosphatase class 1 (349 aa).

Residues glutamate 92, aspartate 113, leucine 115, and aspartate 116 each coordinate Mg(2+). Substrate contacts are provided by residues 116 to 119 (DGSS), asparagine 209, tyrosine 242, and lysine 272. Glutamate 278 contributes to the Mg(2+) binding site.

Belongs to the FBPase class 1 family. In terms of assembly, homotetramer. Mg(2+) serves as cofactor.

It is found in the cytoplasm. It catalyses the reaction beta-D-fructose 1,6-bisphosphate + H2O = beta-D-fructose 6-phosphate + phosphate. Its pathway is carbohydrate biosynthesis; Calvin cycle. This is Fructose-1,6-bisphosphatase class 1 from Chloroherpeton thalassium (strain ATCC 35110 / GB-78).